Consider the following 107-residue polypeptide: 2Fe-2S ferredoxin CtmE (107 aa).

In terms of domain architecture, 2Fe-2S ferredoxin-type spans 3 to 106 (VKVTYVDSAN…GLVIHTLEPE (104 aa)). Cys41, Cys47, Cys50, and Cys87 together coordinate [2Fe-2S] cluster.

It belongs to the adrenodoxin/putidaredoxin family. [2Fe-2S] cluster serves as cofactor.

It participates in terpene metabolism; monoterpene degradation. In terms of biological role, involved in the degradation of the cyclic monoterpene limonene. Probably part of an electron transfer system involved in the oxidation of limonene to perillyl alcohol. In Castellaniella defragrans (strain DSM 12143 / CCUG 39792 / 65Phen) (Alcaligenes defragrans), this protein is 2Fe-2S ferredoxin CtmE.